Here is a 2543-residue protein sequence, read N- to C-terminus: Polyketide synthase PksR (2543 aa).

The segment at 165 to 269 is methyltransferase; the sequence is LEIGAGTGGT…KAVLKKNGLL (105 aa). Positions 376 to 452 constitute a Carrier 1 domain; it reads SLIEQTAQFV…ELVEYLVKGH (77 aa). An O-(pantetheine 4'-phosphoryl)serine modification is found at Ser-413. Positions 465 to 485 are disordered; sequence TKPAKNEAPLQTERTDPNKPF. In terms of domain architecture, Ketosynthase family 3 (KS3) 1 spans 527–959; it reads TEDIAIIGVS…GAYANLIIEE (433 aa). Cys-700 (for beta-ketoacyl synthase 1 activity) is an active-site residue. Residues 1114-1242 form an N-terminal hotdog fold region; that stretch reads HFDVSSINEK…GQCGIGSFEP (129 aa). Residues 1114-1397 enclose the PKS/mFAS DH domain; it reads HFDVSSINEK…LKQLRISNQR (284 aa). The interval 1255 to 1397 is C-terminal hotdog fold; that stretch reads TKLHHIDQMY…LKQLRISNQR (143 aa). A Carrier 2 domain is found at 1407–1485; that stretch reads SNLKARIRSY…ELIDFFADKH (79 aa). The residue at position 1445 (Ser-1445) is an O-(pantetheine 4'-phosphoryl)serine. The Ketosynthase family 3 (KS3) 2 domain occupies 1528-1946; it reads ADGIAIIGMS…GVNAHVILEE (419 aa). Residues Cys-1680, His-1815, and His-1862 each act as for beta-ketoacyl synthase 2 activity in the active site. The 75-residue stretch at 2134–2208 folds into the Carrier 3 domain; it reads RINNSSDHHI…DMMDLIAKKQ (75 aa). Ser-2168 carries the post-translational modification O-(pantetheine 4'-phosphoryl)serine. The segment at 2234 to 2514 is thioesterase; that stretch reads RPVFWFHGGV…EFCEKLYSNR (281 aa).

It depends on pantetheine 4'-phosphate as a cofactor.

Its subcellular location is the cytoplasm. The protein operates within antibiotic biosynthesis; bacillaene biosynthesis. Functionally, involved in some intermediate steps for the synthesis of the antibiotic polyketide bacillaene which is involved in secondary metabolism. This is Polyketide synthase PksR (pksR) from Bacillus subtilis (strain 168).